The following is a 124-amino-acid chain: Probable glycine cleavage system H protein (124 aa).

The 82-residue stretch at 23–104 folds into the Lipoyl-binding domain; the sequence is VATVGITDYA…PYKNWLVKIR (82 aa). N6-lipoyllysine is present on K64.

It belongs to the GcvH family. In terms of assembly, the glycine cleavage system is composed of four proteins: P, T, L and H. Requires (R)-lipoate as cofactor.

The glycine cleavage system catalyzes the degradation of glycine. The H protein shuttles the methylamine group of glycine from the P protein to the T protein. This chain is Probable glycine cleavage system H protein, found in Picrophilus torridus (strain ATCC 700027 / DSM 9790 / JCM 10055 / NBRC 100828 / KAW 2/3).